The sequence spans 278 residues: MDIKAYFELIRLKNCLTASFGAFIGGLIASYFNLATVYDLILASIVVFLVCGFGNALNDIYDLKIDKINKPERPIPSKRLSLTDARVFSYLLVFVGLFISLFNMACFLMAVLNSIVLQQYASTYKKNKIIGNLIVAYLTGSVFIFGGIAVGNIDVTIMLFLCALFAMWSREIIKDYEDIEGDIQEKVISIPIKCGEKSVYIAAFLLVFAVFLSPLPYLFGFFGIYYMLSVVFCDLLFLIGIYNLVKNPSKKEAKKASRNIKIVTNLVLIAFLIGSLFK.

Transmembrane regions (helical) follow at residues 12–32 (LKNCLTASFGAFIGGLIASYF), 34–54 (LATVYDLILASIVVFLVCGFG), 91–111 (LLVFVGLFISLFNMACFLMAV), 129–149 (IIGNLIVAYLTGSVFIFGGIA), 153–173 (IDVTIMLFLCALFAMWSREII), 204–224 (FLLVFAVFLSPLPYLFGFFGI), 225–245 (YYMLSVVFCDLLFLIGIYNLV), and 257–277 (SRNIKIVTNLVLIAFLIGSLF).

Belongs to the UbiA prenyltransferase family. DGGGP synthase subfamily. Mg(2+) serves as cofactor.

Its subcellular location is the cell membrane. It catalyses the reaction sn-3-O-(geranylgeranyl)glycerol 1-phosphate + (2E,6E,10E)-geranylgeranyl diphosphate = 2,3-bis-O-(geranylgeranyl)-sn-glycerol 1-phosphate + diphosphate. It functions in the pathway membrane lipid metabolism; glycerophospholipid metabolism. Functionally, prenyltransferase that catalyzes the transfer of the geranylgeranyl moiety of geranylgeranyl diphosphate (GGPP) to the C2 hydroxyl of (S)-3-O-geranylgeranylglyceryl phosphate (GGGP). This reaction is the second ether-bond-formation step in the biosynthesis of archaeal membrane lipids. This chain is Digeranylgeranylglyceryl phosphate synthase, found in Methanococcus maripaludis (strain C7 / ATCC BAA-1331).